A 442-amino-acid chain; its full sequence is MSDTIAAIATAHGVGSISIVRLSGERALEFALRFSRKTKLTPRHATFTKLFNQNNEIIDEAIMIYFKAPYSFTGEDIVEFQTHGGFSVSEVLLEELVSLGARFALAGEFSKRACLNGKMTPLKALNIQDLILSKSALAAKIIARNMQGNLGELLEKIRTDLVKTLAFVETSIDYADDDLPSDLLEKISTMCEENSKILKEIYTLSQSKKGLIEGFKIAIIGKPNVGKSSLLNALLSYERAIVSDIAGTTRDTIEESFKLGTHLLRIIDTAGIRESKDTIEQIGVALSKKSLEDADIILAVFDASRVQDKEDEKIFELLANTDKKIFWILNKSDLENVFKNTRNKNFIKLSAQKDIALLKEELQNYLNSFDSEGIMVSSLDLINACKISSEAIFRAKELLEESSLELFAFELNLAINELARFTKDFQRDEILDEMFGNFCLGK.

(6S)-5-formyl-5,6,7,8-tetrahydrofolate is bound by residues R21, E79, and K118. Positions 214–367 (GFKIAIIGKP…LKEELQNYLN (154 aa)) constitute a TrmE-type G domain. N224 provides a ligand contact to K(+). GTP-binding positions include 224 to 229 (NVGKSS), 243 to 249 (SDIAGTT), and 268 to 271 (DTAG). S228 contributes to the Mg(2+) binding site. K(+) is bound by residues S243, I245, and T248. T249 lines the Mg(2+) pocket. K442 provides a ligand contact to (6S)-5-formyl-5,6,7,8-tetrahydrofolate.

The protein belongs to the TRAFAC class TrmE-Era-EngA-EngB-Septin-like GTPase superfamily. TrmE GTPase family. Homodimer. Heterotetramer of two MnmE and two MnmG subunits. K(+) is required as a cofactor.

It is found in the cytoplasm. Exhibits a very high intrinsic GTPase hydrolysis rate. Involved in the addition of a carboxymethylaminomethyl (cmnm) group at the wobble position (U34) of certain tRNAs, forming tRNA-cmnm(5)s(2)U34. In Campylobacter jejuni subsp. doylei (strain ATCC BAA-1458 / RM4099 / 269.97), this protein is tRNA modification GTPase MnmE.